The chain runs to 467 residues: Mothers against decapentaplegic homolog 2 (467 aa).

Position 2 is an N-acetylserine (Ser-2). A Phosphothreonine modification is found at Thr-8. One can recognise an MH1 domain in the interval 10–176; that stretch reads PVVKRLLGWK…YQRVETPVLP (167 aa). Lys-19 carries the post-translational modification N6-acetyllysine. Positions 74, 149, 161, and 166 each coordinate Zn(2+). Residues 207-217 show a composition bias toward polar residues; it reads PAGIEPQSNYI. Positions 207-251 are disordered; that stretch reads PAGIEPQSNYIPETPPPGYISEDGETSDQQLNQSMDTGSPAELSP. Residue Thr-220 is modified to Phosphothreonine. The PY-motif motif lies at 221 to 225; sequence PPPGY. The span at 233–243 shows a compositional bias: polar residues; that stretch reads SDQQLNQSMDT. Position 240 is a phosphoserine; by CAMK2 (Ser-240). Phosphoserine is present on residues Ser-245, Ser-250, Ser-255, Ser-458, Ser-460, and Ser-464. In terms of domain architecture, MH2 spans 274–467; sequence WCSIAYYELN…SPSVRCSSMS (194 aa). Phosphoserine; by TGFBR1 is present on residues Ser-465 and Ser-467.

The protein belongs to the dwarfin/SMAD family. In terms of assembly, monomer; in the absence of TGF-beta. Heterodimer; in the presence of TGF-beta. Forms a heterodimer with co-SMAD, SMAD4, in the nucleus to form the transactivation complex SMAD2/SMAD4. Found in a complex with SMAD3 and TRIM33 upon addition of TGF-beta. Identified in a complex that contains at least ZNF451, SMAD2, SMAD3 and SMAD4. Interacts (via the MH2 domain) with ZFYVE9; may form trimers with the SMAD4 co-SMAD. Interacts with TAZ/WWRT1. Interacts with FOXH1. Interacts with SNW1. Interacts with CREB-binding protein (CBP) and EP300. Interacts with SNON. Interacts with ALK4/ACVR1B. Interacts with SKOR1. Interacts with SKOR2. Interacts with PRDM16. Interacts (via MH2 domain) with LEMD3. Interacts with RBPMS. Interacts with WWP1. Interacts (dephosphorylated form, via the MH1 and MH2 domains) with RANBP3 (via its C-terminal R domain); the interaction results in the export of dephosphorylated SMAD3 out of the nucleus and termination of the TGF-beta signaling. Interacts with PDPK1 (via PH domain). Interacts with DAB2; the interactions are enhanced upon TGF-beta stimulation. Interacts with USP15. Interacts with PPP5C. Interacts with LDLRAD4 (via the SMAD interaction motif). Interacts (via MH2 domain) with PMEPA1 (via the SMAD interaction motif). Interacts with ZFHX3. Interacts with ZNF451. Interacts with SMURF2 when phosphorylated on Ser-465/467. Interacts with PPM1A. Interacts with TGF-beta. Interacts with TGFBR1. Interacts with TGIF. Interacts with SMAD3 and TRIM33. Interacts with ZNF580. Interacts with NEDD4L in response to TGF-beta. Interacts with HGS. Interacts with AIP1. Interacts with WWP1. Interacts with PML. Interacts weakly with ZNF8. Interacts (when phosphorylated) with RNF111; RNF111 acts as an enhancer of the transcriptional responses by mediating ubiquitination and degradation of SMAD2 inhibitors. Interacts with YAP1 (when phosphorylated at 'Ser-55'). Interacts when phosphorylated with IPO7; the interaction facilitates translocation of SMAD2 to the nucleus. Interacts with MTMR4; negatively regulates TGF-beta signaling through SMAD2 dephosphorylation and retention in endosomes. In terms of processing, in response to TGF-beta, phosphorylated on the C-terminal SXS motif by TGF-beta and activin type 1 receptor kinases, phosphorylation declines progressively in a KMT5A-dependent manner. Phosphorylation in this motif is required for interaction with a number of proteins including SMURF2, SNON and SMAD4 in response to TGF-beta. Dephosphorylated in this motif by PPM1A leading to disruption of the SMAD2/3-SMAD4 complex, nuclear export and termination of the TGF-beta signaling. In response to decorin, the naturally occurring inhibitor of TGF-beta signaling, phosphorylated on Ser-240 by CaMK2. Phosphorylated by MAPK3 upon EGF stimulation; which increases transcriptional activity and stability, and is blocked by calmodulin. Phosphorylated by PDPK1. Acetylated on Lys-19 by coactivators in response to TGF-beta signaling, which increases transcriptional activity. Post-translationally, in response to TGF-beta, ubiquitinated by NEDD4L; which promotes its degradation. Monoubiquitinated, leading to prevent DNA-binding. Deubiquitination by USP15 alleviates inhibition and promotes activation of TGF-beta target genes. Ubiquitinated by RNF111, leading to its degradation: only SMAD2 proteins that are 'in use' are targeted by RNF111, RNF111 playing a key role in activating SMAD2 and regulating its turnover.

It is found in the cytoplasm. Its subcellular location is the nucleus. Its function is as follows. Receptor-regulated SMAD (R-SMAD) that is an intracellular signal transducer and transcriptional modulator activated by TGF-beta (transforming growth factor) and activin type 1 receptor kinases. Binds the TRE element in the promoter region of many genes that are regulated by TGF-beta and, on formation of the SMAD2/SMAD4 complex, activates transcription. Promotes TGFB1-mediated transcription of odontoblastic differentiation genes in dental papilla cells. Positively regulates PDPK1 kinase activity by stimulating its dissociation from the 14-3-3 protein YWHAQ which acts as a negative regulator. The chain is Mothers against decapentaplegic homolog 2 (SMAD2) from Bos taurus (Bovine).